A 387-amino-acid chain; its full sequence is Alkanesulfonate monooxygenase (387 aa).

The protein belongs to the SsuD family.

It carries out the reaction an alkanesulfonate + FMNH2 + O2 = an aldehyde + FMN + sulfite + H2O + 2 H(+). In terms of biological role, catalyzes the desulfonation of aliphatic sulfonates. This Cupriavidus metallidurans (strain ATCC 43123 / DSM 2839 / NBRC 102507 / CH34) (Ralstonia metallidurans) protein is Alkanesulfonate monooxygenase.